Here is a 314-residue protein sequence, read N- to C-terminus: Leucine-rich repeat-containing protein 52 (314 aa).

The N-terminal stretch at 1–23 (MSLASGPSSKLLLFSLGMGLVSG) is a signal peptide. The LRRNT domain occupies 24–53 (SKCPNKCVCQDQEVACIDLHLTEYPADIPL). At 24-244 (SKCPNKCVCQ…MCITHLDQQD (221 aa)) the chain is on the extracellular side. 2 disulfide bridges follow: cysteine 26-cysteine 32 and cysteine 30-cysteine 39. LRR repeat units lie at residues 54-73 (NTRR…ALQL), 78-99 (DLVY…TFIG), 102-123 (RLIY…SFSV), 126-148 (NLVR…VFAN), and 151-172 (SLRY…GFHH). N-linked (GlcNAc...) asparagine glycans are attached at residues asparagine 112, asparagine 131, and asparagine 148. Residues 184–238 (NPWICNCSFLDFTIHLLVSHMDHPDAQNATCTEPAELKGWPITKVGNPLQYMCIT) form the LRRCT domain. 2 disulfide bridges follow: cysteine 188/cysteine 214 and cysteine 190/cysteine 236. Residues asparagine 189 and asparagine 211 are each glycosylated (N-linked (GlcNAc...) asparagine). The chain crosses the membrane as a helical span at residues 245-265 (YIFLLLIGFCIFAAGTVAAWL). The Cytoplasmic portion of the chain corresponds to 266-314 (TGVCAVLYQNALRTSSGDDTEDETGSRFANQIFRSNTHLGPIRRFPELI).

Interacts with KCNMA1. Interacts with KCNU1; this interaction may be required for LRRC52 stability and changes the channel gating properties. N-glycosylated. As to expression, testis-specific (at protein level). At the mRNA level, also detected in kidney, ventricle, spinal cord and skeletal muscle, although at lower levels compared to testis. Expression in testis at the protein level requires the presence of KCNU1.

Its subcellular location is the cell membrane. Its function is as follows. Auxiliary protein of the large-conductance, voltage and calcium-activated potassium channel (BK alpha). Modulates gating properties by producing a marked shift in the BK channel's voltage dependence of activation in the hyperpolarizing direction, and in the absence of calcium. KCNU1 channel auxiliary protein. Modulates KCNU1 gating properties, shifting KCNU1 gating to more negative potentials at a given pH. This Mus musculus (Mouse) protein is Leucine-rich repeat-containing protein 52 (Lrrc52).